A 471-amino-acid polypeptide reads, in one-letter code: WASH complex subunit 1 (471 aa).

The required for WASH complex assembly stretch occupies residues 1–54; it reads MTPTGTQHSLAGQTYAVPLIQPDLRREEAIQQVADALQYLQKVSGDIFSRISQR. The segment at 1 to 167 is WHD1; sequence MTPTGTQHSL…EGLGGLPSNI (167 aa). Positions 297–471 are disordered; the sequence is EDGVLTARPP…GEEDEDDWES (175 aa). A compositionally biased stretch (pro residues) spans 304–336; sequence RPPPPPPPPPPPAPAVLMSVPPPPPPPQAPPGQ. Residues 353–471 are VCA; sequence QGAPKEVVDP…GEEDEDDWES (119 aa). The region spanning 365–387 is the WH2 domain; it reads GRATLLESIRQAGGIGKAKLRSV. The span at 386 to 402 shows a compositional bias: basic and acidic residues; that stretch reads SVKERKLEKKKQKEQEQ. Residues 428–442 show a composition bias toward gly residues; sequence SGKGPGSGASEGPGG. The span at 462-471 shows a compositional bias: acidic residues; that stretch reads GEEDEDDWES.

The protein belongs to the WASH1 family. In terms of assembly, component of the WASH core complex also described as WASH regulatory complex SHRC composed of WASHC1, WASHC2, WASHC3, WASHC4 and WASHC5. The WASH core complex associates with the F-actin-capping protein dimer (formed by CAPZA1, CAPZA2 or CAPZA3 and CAPZB); the assembly has been initially described as WASH complex. Interacts (via WHD1 region) with WASHC2; the interaction is direct. Interacts with alpha-tubulin. Interacts with BECN1; WASHC1 and AMBRA1 can competitively interact with BECN1. Interacts with BLOC1S2; may associate with the BLOC-1 complex. Interacts with tubulin gamma chain (TUBG1 or TUBG2). Interacts with TBC1D23.

The protein resides in the early endosome membrane. It localises to the recycling endosome membrane. It is found in the late endosome. The protein localises to the cytoplasmic vesicle. Its subcellular location is the autophagosome. The protein resides in the cytoplasm. It localises to the cytoskeleton. It is found in the microtubule organizing center. The protein localises to the centrosome. Its subcellular location is the centriole. Its function is as follows. Acts as a component of the WASH core complex that functions as a nucleation-promoting factor (NPF) at the surface of endosomes, where it recruits and activates the Arp2/3 complex to induce actin polymerization, playing a key role in the fission of tubules that serve as transport intermediates during endosome sorting. Involved in endocytic trafficking of EGF. Involved in transferrin receptor recycling. Regulates the trafficking of endosomal alpha5beta1 integrin to the plasma membrane and involved in invasive cell migration. In T-cells involved in endosome-to-membrane recycling of receptors including T-cell receptor (TCR), CD28 and ITGAL; proposed to be implicated in T-cell proliferation and effector function. In dendritic cells involved in endosome-to-membrane recycling of major histocompatibility complex (MHC) class II probably involving retromer and subsequently allowing antigen sampling, loading and presentation during T-cell activation. Involved in negative regulation of autophagy independently from its role in endosomal sorting by inhibiting BECN1 ubiquitination to inactivate PIK3C3/Vps34 activity. The polypeptide is WASH complex subunit 1 (Bos taurus (Bovine)).